The following is a 367-amino-acid chain: 3-dehydroquinate synthase (367 aa).

Residues D69 to K74, G103 to D107, T127 to T128, K140, and K149 contribute to the NAD(+) site. Residues E182, H245, and H262 each contribute to the Zn(2+) site.

Belongs to the sugar phosphate cyclases superfamily. Dehydroquinate synthase family. The cofactor is NAD(+). Requires Co(2+) as cofactor. It depends on Zn(2+) as a cofactor.

It is found in the cytoplasm. It catalyses the reaction 7-phospho-2-dehydro-3-deoxy-D-arabino-heptonate = 3-dehydroquinate + phosphate. It functions in the pathway metabolic intermediate biosynthesis; chorismate biosynthesis; chorismate from D-erythrose 4-phosphate and phosphoenolpyruvate: step 2/7. Catalyzes the conversion of 3-deoxy-D-arabino-heptulosonate 7-phosphate (DAHP) to dehydroquinate (DHQ). This is 3-dehydroquinate synthase from Pseudomonas syringae pv. tomato (strain ATCC BAA-871 / DC3000).